Reading from the N-terminus, the 233-residue chain is Protein Atu3128 (233 aa).

Belongs to the glycosyl hydrolase 88 family.

Seems to regulate the surface properties of the bacterium in the presence of plant cells or plant cell extracts. Mutations in this protein are responsible for an increased aggregation of the bacteria in the presence of pea root cap cells. This is Protein Atu3128 from Agrobacterium fabrum (strain C58 / ATCC 33970) (Agrobacterium tumefaciens (strain C58)).